A 404-amino-acid polypeptide reads, in one-letter code: Coenzyme F420H(2) oxidase (404 aa).

Residues His84, Glu86, Asp88, His89, His152, Asp170, and His233 each contribute to the Fe cation site. Positions 259–399 constitute a Flavodoxin-like domain; it reads VTVIYDTMHH…ACFEAGRRLA (141 aa). Residues 265-270, 317-320, and 351-356 contribute to the FMN site; these read TMHHST, AIYD, and SMGGRG.

In the N-terminal section; belongs to the zinc metallo-hydrolase group 3 family. It depends on FMN as a cofactor. Fe cation is required as a cofactor.

It catalyses the reaction 2 reduced coenzyme F420-(gamma-L-Glu)(n) + O2 = 2 oxidized coenzyme F420-(gamma-L-Glu)(n) + 2 H2O + 2 H(+). Functionally, catalyzes the oxidation of F420H(2) with O(2). May be involved in O(2) detoxification, reducing the intracellular O(2) concentration to a level allowing growth at the expense of methane formation. This is Coenzyme F420H(2) oxidase from Methanothermobacter thermautotrophicus (strain ATCC 29096 / DSM 1053 / JCM 10044 / NBRC 100330 / Delta H) (Methanobacterium thermoautotrophicum).